The chain runs to 103 residues: Trp operon repressor homolog (103 aa).

Residues Q59–S82 mediate DNA binding.

This sequence belongs to the TrpR family. As to quaternary structure, homodimer.

The protein resides in the cytoplasm. Its function is as follows. This protein is an aporepressor. When complexed with L-tryptophan it binds the operator region of the trp operon and prevents the initiation of transcription. The sequence is that of Trp operon repressor homolog from Vibrio parahaemolyticus serotype O3:K6 (strain RIMD 2210633).